We begin with the raw amino-acid sequence, 754 residues long: Putative sulfate transporter YPR003C (754 aa).

The disordered stretch occupies residues 1-91 (MTSNNSLLGR…NTSNTNNNDS (91 aa)). The Cytoplasmic segment spans residues 1–118 (MTSNNSLLGR…SWLPEYTFNK (118 aa)). Residues 25–45 (RSVDQRDTFSDNFDYDKDSSN) show a composition bias toward basic and acidic residues. Low complexity predominate over residues 65-89 (NSRSGCTNNTNNTNNTSNTSNTNNN). Residues 119–139 (LWGDVIAGISVASFQIPLALS) traverse the membrane as a helical segment. Topologically, residues 140 to 146 (YTTSIAH) are lumenal. A helical membrane pass occupies residues 147-167 (VPPLCGLYSLAISPFVYGILG). Topologically, residues 168–172 (SVPQM) are cytoplasmic. A helical transmembrane segment spans residues 173–193 (IVGPESAISLVVGQAVESITL). Residues 194-199 (HKENVS) lie on the Lumenal side of the membrane. A helical transmembrane segment spans residues 200 to 220 (LIDISTVITFVSGTILLFSGI). The Cytoplasmic segment spans residues 221 to 232 (SRFGFLGNVLSK). Residues 233–253 (ALLRGFISSVGLVMIINSLIS) traverse the membrane as a helical segment. The Lumenal segment spans residues 254-282 (ELKLDKFLVSLPQHYHTPFEKILFLIDYA). Residues 283–303 (PAQYHIPTAIFSGCCLIVLFL) form a helical membrane-spanning segment. Over 304 to 317 (TRLLKRKLMKYHKS) the chain is Cytoplasmic. The helical transmembrane segment at 318–338 (AIFFPDILLVVIVTILISMKF) threads the bilayer. Over 339–370 (NLKHRYGISIIGDFSMDNFDELKNPLTRPRRK) the chain is Lumenal. A helical transmembrane segment spans residues 371-391 (LIPDLFSASLIVAMLGFFEST). Residues 392–410 (TASKSLGTTYNLTVSSNRE) are Cytoplasmic-facing. Residues 411–431 (LVALGFMNIVISLFGALPAFG) traverse the membrane as a helical segment. Topologically, residues 432-450 (GYGRSKINALSGAQSVMSG) are lumenal. A helical membrane pass occupies residues 451-471 (VFMGVITLITMNLLLQFVHYI). Over 472–474 (PNC) the chain is Cytoplasmic. Residues 475-495 (VLSVITTIIGISLLEEVPGDI) form a helical membrane-spanning segment. Topologically, residues 496-517 (KFHLRCGGFSELFVFAVTFCTT) are lumenal. The chain crosses the membrane as a helical span at residues 518-538 (IFYSIEAGICIGCVYSIINII). Over 539–754 (KHSAKSRIQI…SNTLFNSSLV (216 aa)) the chain is Cytoplasmic. The STAS domain maps to 574 to 725 (DVEGTEEIEG…DSIDAALYEI (152 aa)).

Belongs to the SLC26A/SulP transporter (TC 2.A.53) family.

It is found in the endoplasmic reticulum membrane. Possible sulfate transporter. This chain is Putative sulfate transporter YPR003C, found in Saccharomyces cerevisiae (strain ATCC 204508 / S288c) (Baker's yeast).